The chain runs to 530 residues: Plexin domain-containing protein 2 (530 aa).

The N-terminal stretch at 1–30 (MARFRRADLAAAGVMLLCHFLTDRFQFAHG) is a signal peptide. Residues 31 to 455 (EPGHHTNDWI…AEKKGGTLHA (425 aa)) lie on the Extracellular side of the membrane. 2 N-linked (GlcNAc...) asparagine glycosylation sites follow: Asn103 and Asn160. One can recognise a PSI domain in the interval 327 to 372 (TCLQFNGCGPCVSSQIGFNCSWCSKLQRCSSGFDRHRQDWVDSGCP). Positions 378–387 (KEKMCEKTEP) are enriched in basic and acidic residues. The tract at residues 378–399 (KEKMCEKTEPGETSQTTTTSHT) is disordered. Low complexity predominate over residues 390-399 (TSQTTTTSHT). A helical transmembrane segment spans residues 456–476 (GLIVGILILVLIIAAAILVTV). Residues 477-530 (YMYHHPTSAASIFFIERRPSRWPAMKFRRGSGHPAYAEVEPVGEKEGFIVSEQC) are Cytoplasmic-facing. Ser507 is modified (phosphoserine).

The protein belongs to the plexin family. As to quaternary structure, interacts with CTTN. As to expression, expressed in tumor endothelium and in vessels of some normal tissues, such as the muscle and lung.

It is found in the membrane. Functionally, may play a role in tumor angiogenesis. The chain is Plexin domain-containing protein 2 (Plxdc2) from Mus musculus (Mouse).